Reading from the N-terminus, the 507-residue chain is Histidine ammonia-lyase (507 aa).

A cross-link (5-imidazolinone (Ala-Gly)) is located at residues 141 to 143 (ASG). Serine 142 bears the 2,3-didehydroalanine (Ser) mark.

The protein belongs to the PAL/histidase family. In terms of processing, contains an active site 4-methylidene-imidazol-5-one (MIO), which is formed autocatalytically by cyclization and dehydration of residues Ala-Ser-Gly.

It is found in the cytoplasm. It carries out the reaction L-histidine = trans-urocanate + NH4(+). It functions in the pathway amino-acid degradation; L-histidine degradation into L-glutamate; N-formimidoyl-L-glutamate from L-histidine: step 1/3. This chain is Histidine ammonia-lyase, found in Natranaerobius thermophilus (strain ATCC BAA-1301 / DSM 18059 / JW/NM-WN-LF).